The chain runs to 677 residues: Methionine--tRNA ligase (677 aa).

The 'HIGH' region signature appears at Pro-15–His-25. Positions 146, 149, 159, and 162 each coordinate Zn(2+). Positions Lys-333 to Ser-337 match the 'KMSKS' region motif. Lys-336 is an ATP binding site. The region spanning Asp-575–Lys-677 is the tRNA-binding domain.

The protein belongs to the class-I aminoacyl-tRNA synthetase family. MetG type 1 subfamily. Homodimer. Zn(2+) serves as cofactor.

It localises to the cytoplasm. The catalysed reaction is tRNA(Met) + L-methionine + ATP = L-methionyl-tRNA(Met) + AMP + diphosphate. Its function is as follows. Is required not only for elongation of protein synthesis but also for the initiation of all mRNA translation through initiator tRNA(fMet) aminoacylation. In Salmonella arizonae (strain ATCC BAA-731 / CDC346-86 / RSK2980), this protein is Methionine--tRNA ligase.